A 198-amino-acid chain; its full sequence is Single-stranded DNA cytosine deaminase (198 aa).

Residues 1–30 (MDSLLMKQRKFLYHFKNVRWAKGRHETYLC) carry the Bipartite nuclear localization signal motif. Residues 2-26 (DSLLMKQRKFLYHFKNVRWAKGRHE) form an interaction with SUPT6H region. The CMP/dCMP-type deaminase domain maps to 23–129 (GRHETYLCYV…KAEPEGLRRL (107 aa)). Thr27 is modified (phosphothreonine; by PKA). Residue Ser38 is modified to Phosphoserine; by PKA. The tract at residues 39 to 42 (ATSF) is important for interaction with CTNNBL1. Zn(2+) is bound at residue His56. Catalysis depends on Glu58, which acts as the Proton donor. Residues Cys87 and Cys90 each contribute to the Zn(2+) site. A required for interaction with RNF126 region spans residues 88-116 (YDCARHVADFLRGYPNLSLRIFAARLYFC). Residues 183 to 198 (LYEVDDLRDAFRTLGL) carry the Nuclear export signal motif.

Belongs to the cytidine and deoxycytidylate deaminase family. As to quaternary structure, interacts with CTNNBL1; the interaction is important for the immunoglobulin switch activity of AICDA. Interacts (via its NLS) with KPNA1. Interacts with PKA/PRKACA and PRKAR1A/PKR1. Interacts with SUPT6H, TRIM28 and NCL. Directly interacts with MCM3AP; this interaction may favor AICDA recruitment to immunoglobulin variable region genes, hence promoting somatic hypermutations. Zn(2+) is required as a cofactor. Ser-38 is the major site whereas Thr-27 is the minor site of phosphorylation. Phosphorylation regulates its class-switch recombination activity. In terms of processing, probably monoubiquitinated on several residues by RNF126. Expressed in thymus, lung, spleen, kidney, small intestine, lymph node and tonsil.

Its subcellular location is the nucleus. It is found in the cytoplasm. The enzyme catalyses a 2'-deoxycytidine in single-stranded DNA + H2O + H(+) = a 2'-deoxyuridine in single-stranded DNA + NH4(+). Its function is as follows. Single-stranded DNA-specific cytidine deaminase. Involved in somatic hypermutation (SHM), gene conversion, and class-switch recombination (CSR) in B-lymphocytes by deaminating C to U during transcription of Ig-variable (V) and Ig-switch (S) region DNA. Required for several crucial steps of B-cell terminal differentiation necessary for efficient antibody responses. May also play a role in the epigenetic regulation of gene expression by participating in DNA demethylation. The protein is Single-stranded DNA cytosine deaminase (AICDA) of Canis lupus familiaris (Dog).